A 236-amino-acid chain; its full sequence is Probable glutathione S-transferase GSTU6 (236 aa).

One can recognise a GST N-terminal domain in the interval 5–84 (GELKLLGVWS…YIDEVWPGGA (80 aa)). Residues Ser-15, Lys-42, Val-56, and 68 to 69 (ES) each bind glutathione. One can recognise a GST C-terminal domain in the interval 94 to 228 (DPYERAVARF…KLLEFRQTLL (135 aa)).

It belongs to the GST superfamily. Tau family. In terms of tissue distribution, expressed in seedling shoots and roots.

It carries out the reaction RX + glutathione = an S-substituted glutathione + a halide anion + H(+). Its function is as follows. Conjugation of reduced glutathione to a wide number of exogenous and endogenous hydrophobic electrophiles. The chain is Probable glutathione S-transferase GSTU6 (GSTU6) from Oryza sativa subsp. japonica (Rice).